An 828-amino-acid chain; its full sequence is USP6 N-terminal-like protein (828 aa).

Position 1 is an N-acetylmethionine (methionine 1). Residues glycine 100 to glycine 292 form the Rab-GAP TBC domain. A compositionally biased stretch (basic and acidic residues) spans aspartate 355–lysine 367. Residues aspartate 355–leucine 722 are disordered. Residues serine 391, serine 396, and serine 400 each carry the phosphoserine modification. A compositionally biased stretch (basic and acidic residues) spans lysine 434 to arginine 451. Low complexity predominate over residues asparagine 465–asparagine 478. Composition is skewed to basic and acidic residues over residues arginine 498 to glycine 508 and lysine 535 to arginine 544. Phosphoserine occurs at positions 546 and 549. Tyrosine 582 carries the phosphotyrosine modification. Serine 585 carries the post-translational modification Phosphoserine. Polar residues predominate over residues proline 592–phenylalanine 603. A phosphoserine mark is found at serine 642, serine 655, serine 659, serine 676, and serine 680. Composition is skewed to polar residues over residues threonine 648–proline 666 and serine 673–lysine 683. A compositionally biased stretch (low complexity) spans serine 686 to arginine 697. Serine 716 bears the Phosphoserine mark. The residue at position 729 (tyrosine 729) is a Phosphotyrosine. Residues lysine 789–arginine 817 are disordered.

In terms of assembly, interacts with EPS8. Widely expressed.

The protein localises to the golgi apparatus. It is found in the cytoplasmic vesicle. In terms of biological role, acts as a GTPase-activating protein for RAB5A and RAB43. Involved in receptor trafficking. In complex with EPS8 inhibits internalization of EGFR. Involved in retrograde transport from the endocytic pathway to the Golgi apparatus. Involved in the transport of Shiga toxin from early and recycling endosomes to the trans-Golgi network. Required for structural integrity of the Golgi complex. This is USP6 N-terminal-like protein (USP6NL) from Homo sapiens (Human).